A 239-amino-acid polypeptide reads, in one-letter code: Ribonuclease 3 (239 aa).

The RNase III domain maps to 12–137 (RAKLEALIGH…LIAAIYLDGG (126 aa)). Mg(2+) is bound at residue E50. D54 is an active-site residue. Mg(2+) is bound by residues D123 and E126. Residue E126 is part of the active site. Positions 162-231 (DAKTELQEWS…ATKMLEREGI (70 aa)) constitute a DRBM domain.

This sequence belongs to the ribonuclease III family. Homodimer. Mg(2+) serves as cofactor.

The protein resides in the cytoplasm. The catalysed reaction is Endonucleolytic cleavage to 5'-phosphomonoester.. In terms of biological role, digests double-stranded RNA. Involved in the processing of primary rRNA transcript to yield the immediate precursors to the large and small rRNAs (23S and 16S). Processes some mRNAs, and tRNAs when they are encoded in the rRNA operon. Processes pre-crRNA and tracrRNA of type II CRISPR loci if present in the organism. The chain is Ribonuclease 3 from Rhizobium etli (strain ATCC 51251 / DSM 11541 / JCM 21823 / NBRC 15573 / CFN 42).